The primary structure comprises 83 residues: Hainantoxin-III 7 (83 aa).

The first 21 residues, 1-21 (MKASMFLALAGLVLLFVVGYA), serve as a signal peptide directing secretion. A propeptide spanning residues 22–48 (SESEEKEFPRELLSKVFAVDDFKGEER) is cleaved from the precursor. 3 disulfide bridges follow: cysteine 50-cysteine 65, cysteine 57-cysteine 70, and cysteine 64-cysteine 77. Leucine 81 carries the post-translational modification Leucine amide.

The protein belongs to the neurotoxin 10 (Hwtx-1) family. 15 (Hntx-3) subfamily. As to quaternary structure, monomer. Expressed by the venom gland.

It localises to the secreted. Functionally, selective antagonist of neuronal tetrodotoxin (TTX)-sensitive voltage-gated sodium channels (IC(50)=1270 nM on Nav1.1/SCN1A, 270 nM on Nav1.2/SCN2A, 491 nM on Nav1.3/SCN3A and 232 nM on Nav1.7/SCN9A). This toxin suppress Nav1.7 current amplitude without significantly altering the activation, inactivation, and repriming kinetics. Short extreme depolarizations partially activate the toxin-bound channel, indicating voltage-dependent inhibition of this toxin. This toxin increases the deactivation of the Nav1.7 current after extreme depolarizations. The toxin-Nav1.7 complex is gradually dissociated upon prolonged strong depolarizations in a voltage-dependent manner, and the unbound toxin rebinds to Nav1.7 after a long repolarization. Moreover, analysis of chimeric channels showed that the DIIS3-S4 linker is critical for toxin binding to Nav1.7. These data are consistent with this toxin interacting with Nav1.7 site 4 and trapping the domain II voltage sensor in the closed state. The sequence is that of Hainantoxin-III 7 from Cyriopagopus hainanus (Chinese bird spider).